We begin with the raw amino-acid sequence, 100 residues long: Coiled-coil domain-containing protein 167 (100 aa).

Residues 14-81 (VASEIDRVEE…VLRGENRRNM (68 aa)) adopt a coiled-coil conformation. A helical membrane pass occupies residues 82-99 (MLSVALLAISALFYYTFI).

It localises to the membrane. In Danio rerio (Zebrafish), this protein is Coiled-coil domain-containing protein 167 (ccdc167).